Reading from the N-terminus, the 602-residue chain is mRNA-decapping enzyme 1A (602 aa).

Residue Ser-82 is modified to Phosphoserine. The span at 152–161 shows a compositional bias: basic and acidic residues; it reads RSQQAARDKQ. 3 disordered regions span residues 152–174, 191–234, and 267–291; these read RSQQAARDKQSPSQANGCSDQRP, NQMG…PSGH, and GDASQKEPSSFLPFPFEQSGGAPQS. 3 positions are modified to phosphoserine: Ser-162, Ser-199, and Ser-200. A compositionally biased stretch (polar residues) spans 193 to 229; the sequence is MGGSNISSPGLQPSTQLSNLGSTETLEETPSGSQDKS. A phosphoserine mark is found at Ser-335 and Ser-339. At Thr-367 the chain carries Phosphothreonine. The residue at position 372 (Ser-372) is a Phosphoserine. An Asymmetric dimethylarginine modification is found at Arg-395. The residue at position 420 (Thr-420) is a Phosphothreonine. Phosphoserine is present on residues Ser-441, Ser-542, Ser-543, and Ser-545. Phosphothreonine occurs at positions 548 and 551.

This sequence belongs to the DCP1 family. In terms of assembly, forms a complex with EDC3, DCP2, DDX6 and EDC4/HEDLS, within this complex directly interacts with EDC3. Part of a cytoplasmic complex containing proteins involved in mRNA decay, including XRN1 and LSM1. Interacts with DCP1B. Interacts with DCP2. Interacts with DDX17 in an RNA-independent manner. Interacts with PNRC2. Interacts with SMAD4. Interacts with UPF1. Interacts with ZC3HAV1. Interacts with ZFP36L1. Interacts with NBDY. Interacts with DHX34; the interaction is RNA-independent. As to expression, ubiquitous, with highest expression in the spleen and testis (at protein level).

It localises to the cytoplasm. The protein localises to the P-body. The protein resides in the nucleus. The enzyme catalyses a 5'-end (N(7)-methyl 5'-triphosphoguanosine)-ribonucleoside in mRNA + H2O = N(7)-methyl-GDP + a 5'-end phospho-ribonucleoside in mRNA + 2 H(+). Its function is as follows. Necessary for the degradation of mRNAs, both in normal mRNA turnover and in nonsense-mediated mRNA decay. Removes the 7-methyl guanine cap structure from mRNA molecules, yielding a 5'-phosphorylated mRNA fragment and 7m-GDP. Contributes to the transactivation of target genes after stimulation by TGFB1. Essential for embryonic development. This Mus musculus (Mouse) protein is mRNA-decapping enzyme 1A (Dcp1a).